The sequence spans 117 residues: Peptidyl-tRNA hydrolase (117 aa).

It belongs to the PTH2 family.

The protein resides in the cytoplasm. It carries out the reaction an N-acyl-L-alpha-aminoacyl-tRNA + H2O = an N-acyl-L-amino acid + a tRNA + H(+). The natural substrate for this enzyme may be peptidyl-tRNAs which drop off the ribosome during protein synthesis. This is Peptidyl-tRNA hydrolase from Metallosphaera sedula (strain ATCC 51363 / DSM 5348 / JCM 9185 / NBRC 15509 / TH2).